The chain runs to 227 residues: Cytochrome c oxidase subunit 2 (227 aa).

Residues 1–14 (MAYPVQLGFQDAAS) lie on the Mitochondrial intermembrane side of the membrane. A helical membrane pass occupies residues 15–45 (PIMEELLYFHDHTLMIVFLISSLVLYIISLM). The Mitochondrial matrix segment spans residues 46–59 (LTTKLMHTSTMDAQ). Residues 60–87 (EVETVWTILPAIILILIALPSLRILYMM) form a helical membrane-spanning segment. Residues 88 to 227 (DEITTPSLTL…HFEEWLLSMF (140 aa)) are Mitochondrial intermembrane-facing. Cu cation is bound by residues His-161, Cys-196, Glu-198, Cys-200, His-204, and Met-207. Glu-198 is a binding site for Mg(2+).

It belongs to the cytochrome c oxidase subunit 2 family. Component of the cytochrome c oxidase (complex IV, CIV), a multisubunit enzyme composed of 14 subunits. The complex is composed of a catalytic core of 3 subunits MT-CO1, MT-CO2 and MT-CO3, encoded in the mitochondrial DNA, and 11 supernumerary subunits COX4I, COX5A, COX5B, COX6A, COX6B, COX6C, COX7A, COX7B, COX7C, COX8 and NDUFA4, which are encoded in the nuclear genome. The complex exists as a monomer or a dimer and forms supercomplexes (SCs) in the inner mitochondrial membrane with NADH-ubiquinone oxidoreductase (complex I, CI) and ubiquinol-cytochrome c oxidoreductase (cytochrome b-c1 complex, complex III, CIII), resulting in different assemblies (supercomplex SCI(1)III(2)IV(1) and megacomplex MCI(2)III(2)IV(2)). Found in a complex with TMEM177, COA6, COX18, COX20, SCO1 and SCO2. Interacts with TMEM177 in a COX20-dependent manner. Interacts with COX20. Interacts with COX16. Requires Cu cation as cofactor.

Its subcellular location is the mitochondrion inner membrane. The catalysed reaction is 4 Fe(II)-[cytochrome c] + O2 + 8 H(+)(in) = 4 Fe(III)-[cytochrome c] + 2 H2O + 4 H(+)(out). Its function is as follows. Component of the cytochrome c oxidase, the last enzyme in the mitochondrial electron transport chain which drives oxidative phosphorylation. The respiratory chain contains 3 multisubunit complexes succinate dehydrogenase (complex II, CII), ubiquinol-cytochrome c oxidoreductase (cytochrome b-c1 complex, complex III, CIII) and cytochrome c oxidase (complex IV, CIV), that cooperate to transfer electrons derived from NADH and succinate to molecular oxygen, creating an electrochemical gradient over the inner membrane that drives transmembrane transport and the ATP synthase. Cytochrome c oxidase is the component of the respiratory chain that catalyzes the reduction of oxygen to water. Electrons originating from reduced cytochrome c in the intermembrane space (IMS) are transferred via the dinuclear copper A center (CU(A)) of subunit 2 and heme A of subunit 1 to the active site in subunit 1, a binuclear center (BNC) formed by heme A3 and copper B (CU(B)). The BNC reduces molecular oxygen to 2 water molecules using 4 electrons from cytochrome c in the IMS and 4 protons from the mitochondrial matrix. The protein is Cytochrome c oxidase subunit 2 (MT-CO2) of Propithecus tattersalli (Golden-crowned Sifaka).